The primary structure comprises 419 residues: Inositol-tetrakisphosphate 1-kinase (419 aa).

Position 18 (lysine 18) interacts with 1D-myo-inositol 1,3,4-trisphosphate. 2 residues coordinate ATP: arginine 106 and lysine 157. The 218-residue stretch at 117–334 (EAYMKDDRIC…TGGAATEEVA (218 aa)) folds into the ATP-grasp domain. 1D-myo-inositol 1,3,4-trisphosphate-binding residues include histidine 167 and lysine 199. ATP contacts are provided by residues 188-199 (QNFINHNAVLYK), serine 214, serine 232, and serine 236. Residues aspartate 281, aspartate 295, and asparagine 297 each coordinate Mg(2+). Asparagine 297 contacts 1D-myo-inositol 1,3,4-trisphosphate. Lysine 388 is modified (N6-acetyllysine; by EP300 and CREBBP). Serine 401 bears the Phosphoserine mark. An N6-acetyllysine; by EP300 and CREBBP modification is found at lysine 415.

Belongs to the ITPK1 family. In terms of assembly, monomer. Interacts with GPS1/COPS1. Mg(2+) serves as cofactor. Post-translationally, acetylation by EP300 and CREBBP destabilizes ITPK1, and down-regulates enzymatic activity. Deacetylated by SIRT1.

It carries out the reaction 1D-myo-inositol 3,4,5,6-tetrakisphosphate + ATP = 1D-myo-inositol 1,3,4,5,6-pentakisphosphate + ADP + H(+). The catalysed reaction is 1D-myo-inositol 1,3,4-trisphosphate + ATP = 1D-myo-inositol 1,3,4,5-tetrakisphosphate + ADP + H(+). The enzyme catalyses 1D-myo-inositol 1,3,4-trisphosphate + ATP = 1D-myo-inositol 1,3,4,6-tetrakisphosphate + ADP + H(+). It catalyses the reaction 1D-myo-inositol 3,4,6-trisphosphate + ATP = 1D-myo-inositol 1,3,4,6-tetrakisphosphate + ADP + H(+). It carries out the reaction 1D-myo-inositol 1,3,4-trisphosphate + 1D-myo-inositol 1,3,4,5,6-pentakisphosphate = 1D-myo-inositol 3,4,5,6-tetrakisphosphate + 1D-myo-inositol 1,3,4,6-tetrakisphosphate. The catalysed reaction is 1D-myo-inositol 1,3,4-trisphosphate + 1D-myo-inositol 1,3,4,5,6-pentakisphosphate = 1D-myo-inositol 3,4,5,6-tetrakisphosphate + 1D-myo-inositol 1,3,4,5-tetrakisphosphate. In terms of biological role, kinase that can phosphorylate various inositol polyphosphate such as Ins(3,4,5,6)P4 or Ins(1,3,4)P3. Phosphorylates Ins(3,4,5,6)P4 at position 1 to form Ins(1,3,4,5,6)P5. This reaction is thought to have regulatory importance, since Ins(3,4,5,6)P4 is an inhibitor of plasma membrane Ca(2+)-activated Cl(-) channels, while Ins(1,3,4,5,6)P5 is not. Also phosphorylates Ins(1,3,4)P3 on O-5 and O-6 to form Ins(1,3,4,6)P4, an essential molecule in the hexakisphosphate (InsP6) pathway. Also acts as an inositol polyphosphate phosphatase that dephosphorylates Ins(1,3,4,5)P4 and Ins(1,3,4,6)P4 to Ins(1,3,4)P3, and Ins(1,3,4,5,6)P5 to Ins(3,4,5,6)P4. May also act as an isomerase that interconverts the inositol tetrakisphosphate isomers Ins(1,3,4,5)P4 and Ins(1,3,4,6)P4 in the presence of ADP and magnesium. Probably acts as the rate-limiting enzyme of the InsP6 pathway. Modifies TNF-alpha-induced apoptosis by interfering with the activation of TNFRSF1A-associated death domain. Plays an important role in MLKL-mediated necroptosis. Produces highly phosphorylated inositol phosphates such as inositolhexakisphosphate (InsP6) which bind to MLKL mediating the release of an N-terminal auto-inhibitory region leading to its activation. Essential for activated phospho-MLKL to oligomerize and localize to the cell membrane during necroptosis. The polypeptide is Inositol-tetrakisphosphate 1-kinase (Mus musculus (Mouse)).